Reading from the N-terminus, the 60-residue chain is DNA-directed RNA polymerase subunit Rpo6 (60 aa).

It belongs to the archaeal Rpo6/eukaryotic RPB6 RNA polymerase subunit family. As to quaternary structure, part of the RNA polymerase complex.

It is found in the cytoplasm. It carries out the reaction RNA(n) + a ribonucleoside 5'-triphosphate = RNA(n+1) + diphosphate. DNA-dependent RNA polymerase (RNAP) catalyzes the transcription of DNA into RNA using the four ribonucleoside triphosphates as substrates. In Picrophilus torridus (strain ATCC 700027 / DSM 9790 / JCM 10055 / NBRC 100828 / KAW 2/3), this protein is DNA-directed RNA polymerase subunit Rpo6.